The primary structure comprises 117 residues: Small ribosomal subunit protein bS6 (117 aa).

A disordered region spans residues 92–117; that stretch reads KVDEHPEGPSIQMQKREERDNRRERR. Residues 105 to 117 show a composition bias toward basic and acidic residues; that stretch reads QKREERDNRRERR.

This sequence belongs to the bacterial ribosomal protein bS6 family.

Its function is as follows. Binds together with bS18 to 16S ribosomal RNA. This Dinoroseobacter shibae (strain DSM 16493 / NCIMB 14021 / DFL 12) protein is Small ribosomal subunit protein bS6.